The following is a 484-amino-acid chain: Cobyric acid synthase (484 aa).

A GATase cobBQ-type domain is found at 246–437; that stretch reads ALRVVVPALP…VHGLFDTPAA (192 aa). Cys327 (nucleophile) is an active-site residue. Residue His429 is part of the active site.

This sequence belongs to the CobB/CobQ family. CobQ subfamily.

The protein operates within cofactor biosynthesis; adenosylcobalamin biosynthesis. Its function is as follows. Catalyzes amidations at positions B, D, E, and G on adenosylcobyrinic A,C-diamide. NH(2) groups are provided by glutamine, and one molecule of ATP is hydrogenolyzed for each amidation. The protein is Cobyric acid synthase of Paraburkholderia phymatum (strain DSM 17167 / CIP 108236 / LMG 21445 / STM815) (Burkholderia phymatum).